A 296-amino-acid chain; its full sequence is Peptide transport system permease protein SapC (296 aa).

At 1–28 (MPYDSVYSEKRPPGTLRTAWRKFYSDAP) the chain is on the cytoplasmic side. The chain crosses the membrane as a helical span at residues 29 to 49 (AMVGLYGCAGLALLCIFGGWI). At 50-98 (APYGIDQQFLGYQLLPPSWSRYGEVSFFLGTDDLGRDVLSRLLSGAAPT) the chain is on the periplasmic side. The chain crosses the membrane as a helical span at residues 99-119 (VGGAFIVTLAATLCGLVLGVV). Positions 99 to 284 (VGGAFIVTLA…LSVLLVNLLG (186 aa)) constitute an ABC transmembrane type-1 domain. Topologically, residues 120-133 (AGATHGLRSAVLNH) are cytoplasmic. Residues 134 to 154 (ILDTLLSIPSLLLAIIVVAFA) form a helical membrane-spanning segment. At 155–196 (GPHLSHAMFAVWLALLPRMVRSVYSMVHDELEKEYVIAARLD) the chain is on the periplasmic side. Residues 197–217 (GATTLNILWFAILPNITAGLV) form a helical membrane-spanning segment. At 218 to 222 (TEITR) the chain is on the cytoplasmic side. Residues 223–243 (ALSMAILDIAALGFLDLGAQL) form a helical membrane-spanning segment. Over 244–257 (PSPEWGAMLGDALE) the chain is Periplasmic. A helical transmembrane segment spans residues 258 to 278 (LIYVAPWTVMLPGAAITLSVL). Topologically, residues 279 to 296 (LVNLLGDGIRRAIIAGVE) are cytoplasmic.

This sequence belongs to the binding-protein-dependent transport system permease family. OppBC subfamily.

The protein localises to the cell inner membrane. Functionally, involved in a peptide intake transport system that plays a role in the resistance to antimicrobial peptides. In Salmonella typhi, this protein is Peptide transport system permease protein SapC (sapC).